Here is a 316-residue protein sequence, read N- to C-terminus: Thymidylate synthase (316 aa).

DUMP is bound by residues arginine 23 and 178–179 (RR). Cysteine 198 acts as the Nucleophile in catalysis. Residues 218 to 221 (RSGD), asparagine 229, and 259 to 261 (HIY) contribute to the dUMP site. (6R)-5,10-methylene-5,6,7,8-tetrahydrofolate is bound at residue aspartate 221. Position 315 (alanine 315) interacts with (6R)-5,10-methylene-5,6,7,8-tetrahydrofolate.

It belongs to the thymidylate synthase family. Bacterial-type ThyA subfamily. In terms of assembly, homodimer.

Its subcellular location is the cytoplasm. It carries out the reaction dUMP + (6R)-5,10-methylene-5,6,7,8-tetrahydrofolate = 7,8-dihydrofolate + dTMP. Its pathway is pyrimidine metabolism; dTTP biosynthesis. Its function is as follows. Catalyzes the reductive methylation of 2'-deoxyuridine-5'-monophosphate (dUMP) to 2'-deoxythymidine-5'-monophosphate (dTMP) while utilizing 5,10-methylenetetrahydrofolate (mTHF) as the methyl donor and reductant in the reaction, yielding dihydrofolate (DHF) as a by-product. This enzymatic reaction provides an intracellular de novo source of dTMP, an essential precursor for DNA biosynthesis. The protein is Thymidylate synthase of Pediococcus pentosaceus (strain ATCC 25745 / CCUG 21536 / LMG 10740 / 183-1w).